The chain runs to 393 residues: Formate-dependent phosphoribosylglycinamide formyltransferase (393 aa).

N(1)-(5-phospho-beta-D-ribosyl)glycinamide contacts are provided by residues 20–21 (EL) and E80. ATP-binding positions include R112, K153, 158–163 (SSGKGQ), 193–196 (EAFI), and E201. Residues 117-306 (RLAAEDLNLP…EFELHVRAVL (190 aa)) enclose the ATP-grasp domain. E265 and E277 together coordinate Mg(2+). N(1)-(5-phospho-beta-D-ribosyl)glycinamide contacts are provided by residues D284, K354, and 361–362 (RR).

It belongs to the PurK/PurT family. Homodimer.

It carries out the reaction N(1)-(5-phospho-beta-D-ribosyl)glycinamide + formate + ATP = N(2)-formyl-N(1)-(5-phospho-beta-D-ribosyl)glycinamide + ADP + phosphate + H(+). Its pathway is purine metabolism; IMP biosynthesis via de novo pathway; N(2)-formyl-N(1)-(5-phospho-D-ribosyl)glycinamide from N(1)-(5-phospho-D-ribosyl)glycinamide (formate route): step 1/1. Involved in the de novo purine biosynthesis. Catalyzes the transfer of formate to 5-phospho-ribosyl-glycinamide (GAR), producing 5-phospho-ribosyl-N-formylglycinamide (FGAR). Formate is provided by PurU via hydrolysis of 10-formyl-tetrahydrofolate. This chain is Formate-dependent phosphoribosylglycinamide formyltransferase, found in Syntrophotalea carbinolica (strain DSM 2380 / NBRC 103641 / GraBd1) (Pelobacter carbinolicus).